The following is a 592-amino-acid chain: Anaphase-promoting complex subunit 8 (592 aa).

TPR repeat units follow at residues 66-99 (EYYK…QLPI), 160-193 (QQQQ…NKKD), 291-324 (TYIL…EPNR), 359-392 (PETC…NDRY), 393-426 (LSAW…NPRD), 428-460 (RAWY…RPYD), 461-494 (PRMW…YDRE), and 496-528 (VAIN…CDQE). The tract at residues 129–166 (QQQAQQQAQQAQQESQQNDKNNDTNNNNKTDQQQQQQQ) is disordered.

It belongs to the APC8/CDC23 family. The APC/C is composed of at least 13 subunits that stay tightly associated throughout the cell cycle: anapc1, anapc2, anapc3, anapc4, anapc5, anapc6, anapc7, anapc8, anapc10, anapc11, cdc20, cdc26 and cdh1.

It is found in the nucleus. It functions in the pathway protein modification; protein ubiquitination. Component of the anaphase promoting complex/cyclosome (APC/C), a cell cycle-regulated E3 ubiquitin-protein ligase complex that controls progression through mitosis and the G1 phase of the cell cycle. In Dictyostelium discoideum (Social amoeba), this protein is Anaphase-promoting complex subunit 8 (anapc8).